Here is a 208-residue protein sequence, read N- to C-terminus: Uracil phosphoribosyltransferase (208 aa).

Residues Arg-78, Arg-103, and 130 to 138 contribute to the 5-phospho-alpha-D-ribose 1-diphosphate site; that span reads DPMLATGGS. Uracil-binding positions include Ile-193 and 198 to 200; that span reads GDA. Asp-199 contributes to the 5-phospho-alpha-D-ribose 1-diphosphate binding site.

The protein belongs to the UPRTase family. The cofactor is Mg(2+).

The catalysed reaction is UMP + diphosphate = 5-phospho-alpha-D-ribose 1-diphosphate + uracil. Its pathway is pyrimidine metabolism; UMP biosynthesis via salvage pathway; UMP from uracil: step 1/1. Its activity is regulated as follows. Allosterically activated by GTP. In terms of biological role, catalyzes the conversion of uracil and 5-phospho-alpha-D-ribose 1-diphosphate (PRPP) to UMP and diphosphate. This chain is Uracil phosphoribosyltransferase, found in Shewanella halifaxensis (strain HAW-EB4).